The chain runs to 445 residues: Argininosuccinate synthase (445 aa).

ATP-binding positions include 17 to 25 and Ala43; that span reads AFSGGLDTS. Tyr99 contributes to the L-citrulline binding site. ATP is bound by residues Gly129 and Thr131. Residues Thr131, Asn135, and Asp136 each contribute to the L-aspartate site. Position 135 (Asn135) interacts with L-citrulline. Residue Asp136 participates in ATP binding. The L-citrulline site is built by Arg139 and Ser192. Asp194 contributes to the ATP binding site. 3 residues coordinate L-citrulline: Thr201, Glu203, and Glu280.

The protein belongs to the argininosuccinate synthase family. Type 2 subfamily. As to quaternary structure, homotetramer.

It is found in the cytoplasm. The enzyme catalyses L-citrulline + L-aspartate + ATP = 2-(N(omega)-L-arginino)succinate + AMP + diphosphate + H(+). Its pathway is amino-acid biosynthesis; L-arginine biosynthesis; L-arginine from L-ornithine and carbamoyl phosphate: step 2/3. The protein is Argininosuccinate synthase of Burkholderia cenocepacia (strain HI2424).